Reading from the N-terminus, the 201-residue chain is Recombination protein RecR (201 aa).

A C4-type zinc finger spans residues 60–75; it reads CSRCGNVDTVDPCTVC. In terms of domain architecture, Toprim spans 83-178; that stretch reads SVIIVVEDVS…KITRLAHGVP (96 aa).

Belongs to the RecR family.

Its function is as follows. May play a role in DNA repair. It seems to be involved in an RecBC-independent recombinational process of DNA repair. It may act with RecF and RecO. In Rhizobium etli (strain ATCC 51251 / DSM 11541 / JCM 21823 / NBRC 15573 / CFN 42), this protein is Recombination protein RecR.